The sequence spans 298 residues: Tyrosine recombinase XerC (298 aa).

One can recognise a Core-binding (CB) domain in the interval 1–84 (MNHIQEAFLN…TLRTFYEYWM (84 aa)). One can recognise a Tyr recombinase domain in the interval 105-286 (YLPQFFYEEE…SNQQLRKVYL (182 aa)). Active-site residues include arginine 145, lysine 169, histidine 238, arginine 241, and histidine 264. Tyrosine 273 (O-(3'-phospho-DNA)-tyrosine intermediate) is an active-site residue.

The protein belongs to the 'phage' integrase family. XerC subfamily. In terms of assembly, forms a cyclic heterotetrameric complex composed of two molecules of XerC and two molecules of XerD.

It is found in the cytoplasm. Its function is as follows. Site-specific tyrosine recombinase, which acts by catalyzing the cutting and rejoining of the recombining DNA molecules. The XerC-XerD complex is essential to convert dimers of the bacterial chromosome into monomers to permit their segregation at cell division. It also contributes to the segregational stability of plasmids. The chain is Tyrosine recombinase XerC from Staphylococcus aureus (strain JH1).